Reading from the N-terminus, the 532-residue chain is MSSSDIFDVLNIKQKSSSPNAASPSVPASGKSSKPQLTGMQRELYNLLGENEAPVVVQSMNRFKEKLASNAKPTPWSLANFKANEYLTLQHWVKGSRELIGEEPQESEFKKYDVHLTIPEFTEDEYNSFIPTSNAEENEKQNIGEKVEANGDSTDVNMTEEDTNDKVKESVPQDENKSTSDNKKNNEKWEYNEVKYLFDLCKKYDLRWFVIQDRYDYENSNRTLEDLKSKFYEVSKCYFKAKKPDDPMLQSLNYSKDKETQRKKYLERLLARSAAEIAEEEALIIESRKFEMAAKKTLAERETLLRLLDSPQSDISVAQYLTSNGMSQLYNSLLADKSRKRKIDSAVPENPWMKQQHQFAQQRQQMQQLQQKKLEKHDASATPGPATTVTATETSTNVTSAGSIPSGLQSPKKTKRQKLELQTALKRKSESEYAEQLLKIFNMDERKSLGVIAHGEKLSPGVFLRSAKITTFKPAIQNKIISTAQELGIPARPVMPTFEVVTEYEALLKKIATLLDIKKQIDKIEAGKQITK.

Disordered regions lie at residues 13–39 (KQKS…QLTG), 132–184 (TSNA…DNKK), and 363–417 (RQQM…TKRQ). Residues 16–29 (SSSPNAASPSVPAS) are compositionally biased toward low complexity. Polar residues predominate over residues 30–39 (GKSSKPQLTG). Composition is skewed to basic and acidic residues over residues 137-149 (ENEK…KVEA) and 164-184 (NDKV…DNKK). An SANT domain is found at 181-235 (DNKKNNEKWEYNEVKYLFDLCKKYDLRWFVIQDRYDYENSNRTLEDLKSKFYEVS). A compositionally biased stretch (low complexity) spans 380 to 401 (SATPGPATTVTATETSTNVTSA). Positions 402–411 (GSIPSGLQSP) are enriched in polar residues.

The protein belongs to the SWC4 family. In terms of assembly, component of the SWR1 chromatin-remodeling complex and of the NuA4 histone acetyltransferase complex.

It localises to the nucleus. Component of the SWR1 complex which mediates the ATP-dependent exchange of histone H2A for the H2A variant HZT1 leading to transcriptional regulation of selected genes by chromatin remodeling. Component of the NuA4 histone acetyltransferase complex which is involved in transcriptional activation of selected genes principally by acetylation of nucleosomal histone H4 and H2A. The NuA4 complex is also involved in DNA repair. This is SWR1-complex protein 4 (SWC4) from Candida glabrata (strain ATCC 2001 / BCRC 20586 / JCM 3761 / NBRC 0622 / NRRL Y-65 / CBS 138) (Yeast).